A 238-amino-acid polypeptide reads, in one-letter code: Probable transcriptional regulatory protein CAB166 (238 aa).

Belongs to the TACO1 family.

It is found in the cytoplasm. The chain is Probable transcriptional regulatory protein CAB166 from Chlamydia abortus (strain DSM 27085 / S26/3) (Chlamydophila abortus).